The primary structure comprises 272 residues: L-aspartate dehydrogenase 3 (272 aa).

Positions 126 and 194 each coordinate NAD(+). His-224 is a catalytic residue.

This sequence belongs to the L-aspartate dehydrogenase family.

The catalysed reaction is L-aspartate + NADP(+) + H2O = oxaloacetate + NH4(+) + NADPH + H(+). The enzyme catalyses L-aspartate + NAD(+) + H2O = oxaloacetate + NH4(+) + NADH + H(+). It functions in the pathway cofactor biosynthesis; NAD(+) biosynthesis; iminoaspartate from L-aspartate (dehydrogenase route): step 1/1. Its function is as follows. Specifically catalyzes the NAD or NADP-dependent dehydrogenation of L-aspartate to iminoaspartate. This is L-aspartate dehydrogenase 3 from Bordetella bronchiseptica (strain ATCC BAA-588 / NCTC 13252 / RB50) (Alcaligenes bronchisepticus).